A 124-amino-acid polypeptide reads, in one-letter code: Large ribosomal subunit protein uL18 (124 aa).

It belongs to the universal ribosomal protein uL18 family. In terms of assembly, part of the 50S ribosomal subunit; part of the 5S rRNA/L5/L18/L25 subcomplex. Contacts the 5S and 23S rRNAs.

In terms of biological role, this is one of the proteins that bind and probably mediate the attachment of the 5S RNA into the large ribosomal subunit, where it forms part of the central protuberance. The protein is Large ribosomal subunit protein uL18 of Caldicellulosiruptor saccharolyticus (strain ATCC 43494 / DSM 8903 / Tp8T 6331).